The primary structure comprises 159 residues: Cyclic pyranopterin monophosphate synthase (159 aa).

Substrate contacts are provided by residues 75–77 (LCH) and 113–114 (ME). Residue Asp-128 is part of the active site.

Belongs to the MoaC family. In terms of assembly, homohexamer; trimer of dimers.

It catalyses the reaction (8S)-3',8-cyclo-7,8-dihydroguanosine 5'-triphosphate = cyclic pyranopterin phosphate + diphosphate. The protein operates within cofactor biosynthesis; molybdopterin biosynthesis. Catalyzes the conversion of (8S)-3',8-cyclo-7,8-dihydroguanosine 5'-triphosphate to cyclic pyranopterin monophosphate (cPMP). This chain is Cyclic pyranopterin monophosphate synthase, found in Vibrio atlanticus (strain LGP32) (Vibrio splendidus (strain Mel32)).